We begin with the raw amino-acid sequence, 229 residues long: Heptaprenylglyceryl phosphate synthase (229 aa).

Lys-12 lines the sn-glycerol 1-phosphate pocket. Residues Asp-14 and Thr-40 each contribute to the Mg(2+) site. Sn-glycerol 1-phosphate contacts are provided by residues Tyr-159–Gly-164, Gly-189, and Gly-209–Asn-210.

It belongs to the GGGP/HepGP synthase family. Group I subfamily. Homodimer. Mg(2+) is required as a cofactor.

It carries out the reaction sn-glycerol 1-phosphate + all-trans-heptaprenyl diphosphate = 3-heptaprenyl-sn-glycero-1-phosphate + diphosphate. It functions in the pathway membrane lipid metabolism; glycerophospholipid metabolism. In terms of biological role, prenyltransferase that catalyzes in vivo the transfer of the heptaprenyl moiety of heptaprenyl pyrophosphate (HepPP; 35 carbon atoms) to the C3 hydroxyl of sn-glycerol-1-phosphate (G1P), producing heptaprenylglyceryl phosphate (HepGP). This reaction is an ether-bond-formation step in the biosynthesis of archaea-type G1P-based membrane lipids found in Bacillales. The chain is Heptaprenylglyceryl phosphate synthase from Staphylococcus carnosus (strain TM300).